The sequence spans 222 residues: Glutathione S-transferase A5 (222 aa).

At Ala2 the chain carries N-acetylalanine. In terms of domain architecture, GST N-terminal spans 3-83; the sequence is EKPKLHYSNA…YIASKYNLYG (81 aa). Lys4 is modified (N6-succinyllysine). Glutathione is bound by residues Tyr9, Arg45, 54-55, and 67-68; these read QV and QT. In terms of domain architecture, GST C-terminal spans 85 to 208; sequence DMKERALIDM…QPGSQRKPPM (124 aa).

The protein belongs to the GST superfamily. Alpha family. Homodimer. Expression not detected.

Its subcellular location is the cytoplasm. The catalysed reaction is RX + glutathione = an S-substituted glutathione + a halide anion + H(+). The polypeptide is Glutathione S-transferase A5 (GSTA5) (Homo sapiens (Human)).